A 460-amino-acid chain; its full sequence is Argininosuccinate lyase (460 aa).

It belongs to the lyase 1 family. Argininosuccinate lyase subfamily.

The protein resides in the cytoplasm. It carries out the reaction 2-(N(omega)-L-arginino)succinate = fumarate + L-arginine. The protein operates within amino-acid biosynthesis; L-arginine biosynthesis; L-arginine from L-ornithine and carbamoyl phosphate: step 3/3. This Lacticaseibacillus paracasei (strain ATCC 334 / BCRC 17002 / CCUG 31169 / CIP 107868 / KCTC 3260 / NRRL B-441) (Lactobacillus paracasei) protein is Argininosuccinate lyase.